The following is a 154-amino-acid chain: uncharacterized protein (154 aa).

3 helical membrane passes run 26 to 48, 97 to 119, and 132 to 150; these read VSGW…GVVT, IAMF…LIVF, and GLYT…YCAW.

It is found in the cell membrane. This is an uncharacterized protein from Archaeoglobus fulgidus (strain ATCC 49558 / DSM 4304 / JCM 9628 / NBRC 100126 / VC-16).